The sequence spans 375 residues: Tyrosine--tRNA ligase (375 aa).

Residues Tyr-37, Tyr-168, Gln-172, Asp-175, and Gln-190 each contribute to the L-tyrosine site. The short motif at 251–255 (KMSKS) is the 'KMSKS' region element. Position 254 (Lys-254) interacts with ATP.

Belongs to the class-I aminoacyl-tRNA synthetase family. TyrS type 4 subfamily. Homodimer.

The protein localises to the cytoplasm. The enzyme catalyses tRNA(Tyr) + L-tyrosine + ATP = L-tyrosyl-tRNA(Tyr) + AMP + diphosphate + H(+). Catalyzes the attachment of tyrosine to tRNA(Tyr) in a two-step reaction: tyrosine is first activated by ATP to form Tyr-AMP and then transferred to the acceptor end of tRNA(Tyr). This is Tyrosine--tRNA ligase from Pyrococcus horikoshii (strain ATCC 700860 / DSM 12428 / JCM 9974 / NBRC 100139 / OT-3).